The primary structure comprises 192 residues: 3-hydroxyanthranilate 3,4-dioxygenase (192 aa).

Arginine 50 serves as a coordination point for O2. Fe cation contacts are provided by histidine 54, glutamate 60, and histidine 102. Glutamate 60 is a binding site for substrate. Substrate is bound by residues arginine 106 and glutamate 116. Residues cysteine 131, cysteine 134, cysteine 168, and cysteine 171 each contribute to the a divalent metal cation site.

This sequence belongs to the 3-HAO family. Requires Fe(2+) as cofactor.

The protein localises to the cytoplasm. It catalyses the reaction 3-hydroxyanthranilate + O2 = (2Z,4Z)-2-amino-3-carboxymuconate 6-semialdehyde. Its pathway is cofactor biosynthesis; NAD(+) biosynthesis; quinolinate from L-kynurenine: step 3/3. In terms of biological role, catalyzes the oxidative ring opening of 3-hydroxyanthranilate to 2-amino-3-carboxymuconate semialdehyde, which spontaneously cyclizes to quinolinate. The protein is 3-hydroxyanthranilate 3,4-dioxygenase (bna1) of Neosartorya fischeri (strain ATCC 1020 / DSM 3700 / CBS 544.65 / FGSC A1164 / JCM 1740 / NRRL 181 / WB 181) (Aspergillus fischerianus).